An 846-amino-acid chain; its full sequence is Vinculin (846 aa).

Positions 1 to 257 (MPVKFHTKTL…VLQLTTTFEE (257 aa)) are interaction with TLN. A coiled-coil region spans residues 315–370 (RAKLLAAADELDQILKELEELQAKGLGDSRQARALAHAAAVKLQELEQEIRKALAE). The segment at 617–646 (WVPPRPPLPELEEEEEPPELPPPPEDPASL) is disordered.

This sequence belongs to the vinculin/alpha-catenin family. In terms of assembly, monomer. Interacts with TLN (talin); the interaction facilitates VIN1 binding to F-actin. Expressed in epithelial tissues, specifically the pinacoderm (outer epithelium) and choanoderm (feeding epithelium) (at protein level). Also detected in migratory cells of the mesohyl (at protein level).

It is found in the cytoplasm. Its subcellular location is the cell cortex. It localises to the cell projection. The protein resides in the filopodium. The protein localises to the cytoskeleton. Functionally, actin filament (F-actin)-binding protein which may play a role in cell-cell adhesion. The sequence is that of Vinculin from Oscarella pearsei (Sponge).